Reading from the N-terminus, the 392-residue chain is S-adenosylmethionine decarboxylase proenzyme (392 aa).

Catalysis depends on residues Glu-43 and Glu-46. Ser-100 serves as the catalytic Schiff-base intermediate with substrate; via pyruvic acid. Ser-100 carries the pyruvic acid (Ser); by autocatalysis modification. The Proton donor; for catalytic activity role is filled by Cys-114. Catalysis depends on proton acceptor; for processing activity residues Ser-264 and His-277.

Belongs to the eukaryotic AdoMetDC family. It depends on pyruvate as a cofactor. Is synthesized initially as an inactive proenzyme. Formation of the active enzyme involves a self-maturation process in which the active site pyruvoyl group is generated from an internal serine residue via an autocatalytic post-translational modification. Two non-identical subunits are generated from the proenzyme in this reaction, and the pyruvate is formed at the N-terminus of the alpha chain, which is derived from the carboxyl end of the proenzyme. The post-translation cleavage follows an unusual pathway, termed non-hydrolytic serinolysis, in which the side chain hydroxyl group of the serine supplies its oxygen atom to form the C-terminus of the beta chain, while the remainder of the serine residue undergoes an oxidative deamination to produce ammonia and the pyruvoyl group blocking the N-terminus of the alpha chain.

It catalyses the reaction S-adenosyl-L-methionine + H(+) = S-adenosyl 3-(methylsulfanyl)propylamine + CO2. It functions in the pathway amine and polyamine biosynthesis; S-adenosylmethioninamine biosynthesis; S-adenosylmethioninamine from S-adenosyl-L-methionine: step 1/1. The sequence is that of S-adenosylmethionine decarboxylase proenzyme from Leishmania infantum.